Consider the following 160-residue polypeptide: Putative pre-16S rRNA nuclease (160 aa).

It belongs to the YqgF nuclease family.

It is found in the cytoplasm. Its function is as follows. Could be a nuclease involved in processing of the 5'-end of pre-16S rRNA. In Cereibacter sphaeroides (strain ATCC 17025 / ATH 2.4.3) (Rhodobacter sphaeroides), this protein is Putative pre-16S rRNA nuclease.